The sequence spans 226 residues: Glutathione peroxidase 3 (226 aa).

The signal sequence occupies residues M1–G24. U73 is an active-site residue. Position 73 (U73) is a non-standard amino acid, selenocysteine.

Belongs to the glutathione peroxidase family. Homotetramer. In terms of tissue distribution, secreted in plasma.

It localises to the secreted. The enzyme catalyses 2 glutathione + H2O2 = glutathione disulfide + 2 H2O. The catalysed reaction is tert-butyl hydroperoxide + 2 glutathione = tert-butanol + glutathione disulfide + H2O. Protects cells and enzymes from oxidative damage, by catalyzing the reduction of hydrogen peroxide, lipid peroxides and organic hydroperoxide, by glutathione. This is Glutathione peroxidase 3 from Bos taurus (Bovine).